The following is a 157-amino-acid chain: Oocyte zinc finger protein XlCOF2 (157 aa).

5 C2H2-type zinc fingers span residues 6–28, 34–56, 79–101, 107–129, and 135–157; these read FTCT…MRIH, YSCA…QKNP, FTCT…QRLH, FSCA…QNTH, and FTCT…QKIH.

This sequence belongs to the krueppel C2H2-type zinc-finger protein family.

It is found in the nucleus. Its function is as follows. May be involved in transcriptional regulation. This is Oocyte zinc finger protein XlCOF2 from Xenopus laevis (African clawed frog).